The primary structure comprises 322 residues: MTHNKVVIIGSGPAGHTAAIYLARGELKPVMYEGMLANGIAAGGQLTTTTDVENFPGFPDGINGTTLTENFRAQSLRFGTEIITETVSKLDLSSRPFKYWLEGAEEEEPHTADSVILATGASARRLHITGEDTYWQAGISACAVCDGAVPIYRNKPLAVVGGGDSAAEEAQFLTKYGSKVYVLVRRDKLRASPIMAKRLLANPKVEVLWNTVAEEAQGDGKLLNNLRIKNTNTNEVSDLQVNGLFYAIGHIPATKLVAEQIELDEAGYIKTINGTPRTSIPGFFAAGDVQDKVFRQAITSAGSGCQAALLAMHYLEELEDTD.

FAD contacts are provided by residues 11–14 (SGPA), 40–41 (IA), glutamine 45, asparagine 54, valine 87, and cysteine 145. A disulfide bridge connects residues cysteine 142 and cysteine 145. The residue at position 192 (serine 192) is a Phosphoserine. Phosphothreonine is present on threonine 278. At serine 279 the chain carries Phosphoserine. FAD-binding positions include aspartate 288 and 295 to 297 (RQA).

This sequence belongs to the class-II pyridine nucleotide-disulfide oxidoreductase family. Homodimer. The cofactor is FAD.

It localises to the cytoplasm. The catalysed reaction is [thioredoxin]-dithiol + NADP(+) = [thioredoxin]-disulfide + NADPH + H(+). The protein is Thioredoxin reductase (trr1) of Schizosaccharomyces pombe (strain 972 / ATCC 24843) (Fission yeast).